Here is a 430-residue protein sequence, read N- to C-terminus: Histidine--tRNA ligase (430 aa).

It belongs to the class-II aminoacyl-tRNA synthetase family. Homodimer.

It is found in the cytoplasm. The catalysed reaction is tRNA(His) + L-histidine + ATP = L-histidyl-tRNA(His) + AMP + diphosphate + H(+). In Acinetobacter baumannii (strain ACICU), this protein is Histidine--tRNA ligase.